Consider the following 182-residue polypeptide: NADH-quinone oxidoreductase subunit B 2 (182 aa).

Positions 55, 56, 120, and 150 each coordinate [4Fe-4S] cluster.

It belongs to the complex I 20 kDa subunit family. In terms of assembly, NDH-1 is composed of 14 different subunits. Subunits NuoB, C, D, E, F, and G constitute the peripheral sector of the complex. [4Fe-4S] cluster is required as a cofactor.

It localises to the cell inner membrane. It carries out the reaction a quinone + NADH + 5 H(+)(in) = a quinol + NAD(+) + 4 H(+)(out). Functionally, NDH-1 shuttles electrons from NADH, via FMN and iron-sulfur (Fe-S) centers, to quinones in the respiratory chain. The immediate electron acceptor for the enzyme in this species is believed to be ubiquinone. Couples the redox reaction to proton translocation (for every two electrons transferred, four hydrogen ions are translocated across the cytoplasmic membrane), and thus conserves the redox energy in a proton gradient. In Sorangium cellulosum (strain So ce56) (Polyangium cellulosum (strain So ce56)), this protein is NADH-quinone oxidoreductase subunit B 2.